We begin with the raw amino-acid sequence, 579 residues long: Probable methyl-accepting chemotaxis protein BT9727_0355 (579 aa).

The Cytoplasmic segment spans residues 1–13 (MKKYWHKLSFLQK). A helical transmembrane segment spans residues 14–34 (NVLLTVLVILTLVGTMGALSF). Residues 35-198 (NMFQNSMMSI…ASIVPSTKEK (164 aa)) lie on the Extracellular side of the membrane. The helical transmembrane segment at 199–219 (FIIQGLMFICISVLIATVIQF) threads the bilayer. Over 220–579 (LIVRNALAPL…LQELIGEFKS (360 aa)) the chain is Cytoplasmic. Residues 223 to 274 (RNALAPLRDLREGLRRVGEGDLNIKLEERSDDIGIINSYFNNTIEKFKGIID) form the HAMP domain. At Glu289 the chain carries Glutamate methyl ester (Glu). Residues 293–529 (STKENSMAVQ…NIVRVVNELS (237 aa)) enclose the Methyl-accepting transducer domain. Residue Glu548 is modified to Glutamate methyl ester (Glu).

The protein belongs to the methyl-accepting chemotaxis (MCP) protein family.

Its subcellular location is the cell membrane. Chemotactic-signal transducers respond to changes in the concentration of attractants and repellents in the environment, transduce a signal from the outside to the inside of the cell, and facilitate sensory adaptation through the variation of the level of methylation. In Bacillus thuringiensis subsp. konkukian (strain 97-27), this protein is Probable methyl-accepting chemotaxis protein BT9727_0355.